Here is a 408-residue protein sequence, read N- to C-terminus: Putative UPF0496 protein 2 (408 aa).

2 consecutive transmembrane segments (helical) span residues 224–244 (RIARGTAAAALVGACAAAIVA) and 252–272 (ALVGIGVAAAAFGATPAGAAR). Residues 385–408 (MARGLPPPSPATVTTTSEERLTSS) form a disordered region.

The protein belongs to the UPF0496 family.

It localises to the membrane. This Oryza sativa subsp. japonica (Rice) protein is Putative UPF0496 protein 2.